We begin with the raw amino-acid sequence, 1112 residues long: Rho GTPase-activating protein 7 (1112 aa).

The 68-residue stretch at 37-104 folds into the SAM domain; the sequence is LAEIEAKEAC…LNKCAVMKLE (68 aa). 3 positions are modified to phosphoserine: serine 112, serine 115, and serine 155. Disordered regions lie at residues 146–203, 318–350, 405–459, and 512–574; these read SPKQ…APAR, RSIS…RTRS, PKAL…VSSR, and SDEG…GVGA. Positions 183-193 are enriched in polar residues; sequence VHSTGSLTTHA. Residues 296–468 are focal adhesion-targeting (FAT); the sequence is QLNCVEISAL…RLSIYDNVPG (173 aa). Low complexity-rich tracts occupy residues 320-348 and 409-423; these read ISSS…VTRT and SNGS…SSVN. Phosphoserine is present on serine 343. Residues 437-446 show a composition bias toward basic and acidic residues; sequence LRRENSSPKE. The segment covering 520 to 532 has biased composition (polar residues); that stretch reads ALDSVSPCPSSPK. Basic and acidic residues predominate over residues 534-544; it reads IHLDVDNDRAT. The span at 547–556 shows a compositional bias: polar residues; it reads DLDSTGNSLN. The segment at 635–657 is polybasic cluster (PBR); the sequence is KHGFSWAVPKFMKRIKVPDYKDR. One can recognise a Rho-GAP domain in the interval 662-868; that stretch reads VPLTVNVQRT…HMIAECKKLF (207 aa). Residues 898-1105 form the START domain; sequence CNDDSADYQH…RDSFSHQNTE (208 aa).

In terms of assembly, interacts with EF1A1, facilitates EF1A1 distribution to the membrane periphery and ruffles upon growth factor stimulation and suppresses cell migration. Interacts with tensin TNS1 (via N-terminus); the interaction is decreased by phosphorylation of TNS1. Interacts with TNS3 and PTEN; in resting cells, interacts with TNS3 (via C2 tensin-type domain) but, following growth factor stimulation, TNS3 and PTEN are phosphorylated which leads to weakened interaction with TNS3 and enhanced interaction with PTEN. Interacts (via C-terminus) with tensin TNS4 (via SH2 domain); the interaction is independent of tyrosine phosphorylation of DLC1.

The protein localises to the cytoplasm. It is found in the cell junction. The protein resides in the focal adhesion. It localises to the membrane. Its function is as follows. Functions as a GTPase-activating protein for the small GTPases RHOA, RHOB, RHOC and CDC42, terminating their downstream signaling. This induces morphological changes and detachment through cytoskeletal reorganization, playing a critical role in biological processes such as cell migration and proliferation. Also functions in vivo as an activator of the phospholipase PLCD1. Active DLC1 increases cell migration velocity but reduces directionality. Required for growth factor-induced epithelial cell migration; in resting cells, interacts with TNS3 while PTEN interacts with the p85 regulatory subunit of the PI3K kinase complex but growth factor stimulation induces phosphorylation of TNS3 and PTEN, causing them to change their binding preference so that PTEN interacts with DLC1 and TNS3 interacts with p85. The PTEN-DLC1 complex translocates to the posterior of migrating cells to activate RHOA while the TNS3-p85 complex translocates to the leading edge of migrating cells to promote RAC1 activation. The sequence is that of Rho GTPase-activating protein 7 (DLC1) from Bos taurus (Bovine).